The chain runs to 1024 residues: MSSMKSVSALDNVVVKSPNDRRLYRVIELENGLCALLIHDPDIYPEGSVPDQIDEDDEDGEEEDSDGSSEDDDDDEDDEEDGEGDEEDEDEDEDEVKGKGDHQTKKAAAAMCVSMGSFLDPPEAQGLAHFLEHMLFMGSTEFPDENEYDSYLSKHGGSSNAYTEMEHTCYHFEVKREFLQGALKRFSQFFVAPLMKTEAMEREVLAVDSEFNQALQNDACRLQQLQCYTSAKGHPFNRFAWGNKKSLSGAMENGVDLRECIVKLYKEYYHGGLMKLVVIGGESLDMLESWVVELFGDVKNGSKIRPTLEAEGPIWKGGKLYRLEAVKDVHILDLTWTLPPLRSAYVKKPEDYLAHLLGHEGRGSLHSFLKAKGWATSLSAGVGDDGINRSSLAYVFGMSIHLTDSGLEKIYDIIGYIYQYLKLLRDVSPQEWIFKELQDIGNMDFRFAEEQPADDYAAELSENMLAYPVEHVIYGDYVYQTWDPKLIEDLMGFFTPQNMRIDVVSKSIKSEEFQQEPWFGSSYIEEDVPLSLMESWSNPSEVDNSLHLPSKNQFIPCDFSIRAINSDVDPKSQSPPRCIIDEPFMKFWYKLDETFKVPRANTYFRINLKGAYASVKNCLLTELYINLLKDELNEIIYQASIAKLETSLSMYGDKLELKVYGFNEKIPALLSKILAIAKSFMPNLERFKVIKENMERGFRNTNMKPLNHSTYLRLQLLCKRIYDSDEKLSVLNDLSLDDLNSFIPELRSQIFIEALCHGNLSEDEAVNISNIFKDSLTVEPLPSKCRHGEQITCFPMGAKLVRDVNVKNKSETNSVVELYYQIEPEEAQSTRTKAVLDLFHEIIEEPLFNQLRTKEQLGYVVECGPRLTYRVHGFCFCVQSSKYGPVHLLGRVDNFIKDIEGLLEQLDDESYEDYRSGMIARLLEKDPSLLSETNDLWSQIVDKRYMFDFSHKEAEELRSIQKKDVISWYKTYFRESSPKCRRLAVRVWGCDTNMKETQTDQKAVQVIADAVAFKSTSKFYPSLC.

The interval 41-103 is disordered; that stretch reads PDIYPEGSVP…DEVKGKGDHQ (63 aa). Over residues 52-95 the composition is skewed to acidic residues; sequence QIDEDDEDGEEEDSDGSSEDDDDDEDDEEDGEGDEEDEDEDEDE. His129 contacts Zn(2+). The active-site Proton acceptor is Glu132. Position 133 (His133) interacts with Zn(2+). Glu203 is a catalytic residue. Position 210 (Glu210) interacts with Zn(2+).

The protein belongs to the peptidase M16 family. Zn(2+) serves as cofactor.

The catalysed reaction is Hydrolysis of polypeptides, preferably at -Xaa-|-Arg-Lys-, and less commonly at -Arg-|-Arg-Xaa-, in which Xaa is not Arg or Lys.. Cleaves peptide substrates on the N-terminus of arginine residues in dibasic pairs. This chain is Nardilysin-like, found in Arabidopsis thaliana (Mouse-ear cress).